We begin with the raw amino-acid sequence, 572 residues long: Arginine--tRNA ligase (572 aa).

Residues 122-132 (PNLAKEMHVGH) carry the 'HIGH' region motif.

Belongs to the class-I aminoacyl-tRNA synthetase family. As to quaternary structure, monomer.

Its subcellular location is the cytoplasm. The catalysed reaction is tRNA(Arg) + L-arginine + ATP = L-arginyl-tRNA(Arg) + AMP + diphosphate. The protein is Arginine--tRNA ligase of Neisseria gonorrhoeae (strain NCCP11945).